The primary structure comprises 868 residues: V-set and immunoglobulin domain-containing protein 10-like (868 aa).

The first 27 residues, 1–27 (MGLSWALLPFLLLAFRAELLALQPALG), serve as a signal peptide directing secretion. Over residues 26–52 (LGSQPPSASSSHSMGSSRDFVSNVSSS) the composition is skewed to low complexity. A disordered region spans residues 26–82 (LGSQPPSASSSHSMGSSRDFVSNVSSSQHPQPPGSEASAGIPDSNRFPQGLNSSHVP). At 28–763 (SQPPSASSSH…QAGSDLSPGA (736 aa)) the chain is on the extracellular side. Residues asparagine 48, asparagine 77, and asparagine 88 are each glycosylated (N-linked (GlcNAc...) asparagine). Residues 71-80 (RFPQGLNSSH) show a composition bias toward polar residues. 2 disordered regions span residues 96-154 (LSPD…SGSK) and 323-342 (WSRD…EPPR). Composition is skewed to polar residues over residues 99 to 108 (DVTSSETPPS) and 133 to 143 (PASQISVQTPD). Ig-like C2-type domains follow at residues 289 to 381 (PQLS…ADVS) and 389 to 474 (PVIR…SVFN). A disulfide bridge connects residues cysteine 311 and cysteine 365. Residue asparagine 410 is glycosylated (N-linked (GlcNAc...) asparagine). Cysteines 415 and 458 form a disulfide. Residues asparagine 474, asparagine 628, and asparagine 637 are each glycosylated (N-linked (GlcNAc...) asparagine). The helical transmembrane segment at 764 to 784 (IAGIVLGSLLGLALLAGLLIL) threads the bilayer. Residues 785-868 (CICCLRRYPG…PWTVRAATQV (84 aa)) lie on the Cytoplasmic side of the membrane.

It localises to the membrane. The protein is V-set and immunoglobulin domain-containing protein 10-like (Vsig10l) of Mus musculus (Mouse).